The primary structure comprises 303 residues: ATP synthase gamma chain (303 aa).

The protein belongs to the ATPase gamma chain family. As to quaternary structure, F-type ATPases have 2 components, CF(1) - the catalytic core - and CF(0) - the membrane proton channel. CF(1) has five subunits: alpha(3), beta(3), gamma(1), delta(1), epsilon(1). CF(0) has three main subunits: a, b and c.

It localises to the cell inner membrane. Functionally, produces ATP from ADP in the presence of a proton gradient across the membrane. The gamma chain is believed to be important in regulating ATPase activity and the flow of protons through the CF(0) complex. This chain is ATP synthase gamma chain, found in Bartonella quintana (strain Toulouse) (Rochalimaea quintana).